Reading from the N-terminus, the 407-residue chain is Peptidase T (407 aa).

H81 serves as a coordination point for Zn(2+). Residue D83 is part of the active site. Zn(2+) is bound at residue D142. E176 functions as the Proton acceptor in the catalytic mechanism. Zn(2+) contacts are provided by E177, D199, and H381.

The protein belongs to the peptidase M20B family. Zn(2+) serves as cofactor.

The protein localises to the cytoplasm. The enzyme catalyses Release of the N-terminal residue from a tripeptide.. Cleaves the N-terminal amino acid of tripeptides. The sequence is that of Peptidase T from Streptococcus pneumoniae (strain JJA).